A 1381-amino-acid chain; its full sequence is Major capsid protein (1381 aa).

Belongs to the herpesviridae major capsid protein family. Homomultimer. Makes the hexons and eleven out of twelve pentons. Interacts with triplex proteins 1/TRX1 and 2/TRX2; adjacent capsomers are linked together in groups of three by triplexes, heterotrimeric complexes composed of one molecule of TRX1 and two molecules of TRX2. Interacts with scaffold protein; this interaction allows efficient MCP transport to the host nucleus. Interacts with capsid vertex component 2/CVC2. Interacts with the small capsomere-interacting protein/SCP.

It localises to the virion. It is found in the host nucleus. Its function is as follows. Self-assembles to form an icosahedral capsid with a T=16 symmetry, about 200 nm in diameter, and consisting of 150 hexons and 12 pentons (total of 162 capsomers). Hexons form the edges and faces of the capsid and are each composed of six MCP molecules. In contrast, one penton is found at each of the 12 vertices. Eleven of the pentons are MCP pentamers, while the last vertex is occupied by the portal complex. The capsid is surrounded by a layer of proteinaceous material designated the tegument which, in turn, is enclosed in an envelope of host cell-derived lipids containing virus-encoded glycoproteins. This Epstein-Barr virus (strain AG876) (HHV-4) protein is Major capsid protein.